The chain runs to 312 residues: Light-independent protochlorophyllide reductase iron-sulfur ATP-binding protein (312 aa).

Residues 55–60 (GIGKST) and Lys-84 contribute to the ATP site. Mg(2+) is bound at residue Ser-59. [4Fe-4S] cluster-binding residues include Cys-140 and Cys-174. ATP contacts are provided by residues 225–226 (NR) and 249–251 (PDL).

The protein belongs to the NifH/BchL/ChlL family. Homodimer. Protochlorophyllide reductase is composed of three subunits; BchL, BchN and BchB. [4Fe-4S] cluster is required as a cofactor.

It carries out the reaction chlorophyllide a + oxidized 2[4Fe-4S]-[ferredoxin] + 2 ADP + 2 phosphate = protochlorophyllide a + reduced 2[4Fe-4S]-[ferredoxin] + 2 ATP + 2 H2O. The protein operates within porphyrin-containing compound metabolism; bacteriochlorophyll biosynthesis (light-independent). In terms of biological role, component of the dark-operative protochlorophyllide reductase (DPOR) that uses Mg-ATP and reduced ferredoxin to reduce ring D of protochlorophyllide (Pchlide) to form chlorophyllide a (Chlide). This reaction is light-independent. The L component serves as a unique electron donor to the NB-component of the complex, and binds Mg-ATP. The protein is Light-independent protochlorophyllide reductase iron-sulfur ATP-binding protein of Rhodopseudomonas palustris (strain HaA2).